The following is a 255-amino-acid chain: Probable iron chelatin transport ATP-binding protein jhp_0821 (255 aa).

The 238-residue stretch at Leu3–Pro240 folds into the ABC transporter domain. Ala35–Thr42 is an ATP binding site.

This sequence belongs to the ABC transporter superfamily.

The protein localises to the cell inner membrane. Functionally, part of a binding-protein-dependent transport system for an iron chelatin. Probably responsible for energy coupling to the transport system (Potential). This Helicobacter pylori (strain J99 / ATCC 700824) (Campylobacter pylori J99) protein is Probable iron chelatin transport ATP-binding protein jhp_0821.